Consider the following 103-residue polypeptide: Phosphoribosyl-ATP pyrophosphatase (103 aa).

It belongs to the PRA-PH family.

Its subcellular location is the cytoplasm. It carries out the reaction 1-(5-phospho-beta-D-ribosyl)-ATP + H2O = 1-(5-phospho-beta-D-ribosyl)-5'-AMP + diphosphate + H(+). The protein operates within amino-acid biosynthesis; L-histidine biosynthesis; L-histidine from 5-phospho-alpha-D-ribose 1-diphosphate: step 2/9. This chain is Phosphoribosyl-ATP pyrophosphatase, found in Cereibacter sphaeroides (strain KD131 / KCTC 12085) (Rhodobacter sphaeroides).